A 70-amino-acid polypeptide reads, in one-letter code: Sec-independent protein translocase protein TatA (70 aa).

Residues 1-21 (MAIGVNQLLIILVIIVLLFGA) traverse the membrane as a helical segment.

The protein belongs to the TatA/E family. In terms of assembly, the Tat system comprises two distinct complexes: a TatABC complex, containing multiple copies of TatA, TatB and TatC subunits, and a separate TatA complex, containing only TatA subunits. Substrates initially bind to the TatABC complex, which probably triggers association of the separate TatA complex to form the active translocon.

It localises to the cell inner membrane. Part of the twin-arginine translocation (Tat) system that transports large folded proteins containing a characteristic twin-arginine motif in their signal peptide across membranes. TatA could form the protein-conducting channel of the Tat system. This is Sec-independent protein translocase protein TatA from Campylobacter curvus (strain 525.92).